Reading from the N-terminus, the 66-residue chain is Beta-toxin Cbo3 (66 aa).

In terms of domain architecture, LCN-type CS-alpha/beta spans lysine 1–asparagine 66. 4 cysteine pairs are disulfide-bonded: cysteine 12-cysteine 65, cysteine 16-cysteine 41, cysteine 25-cysteine 46, and cysteine 29-cysteine 48. At asparagine 66 the chain carries Asparagine amide.

Belongs to the long (4 C-C) scorpion toxin superfamily. Sodium channel inhibitor family. Beta subfamily. In terms of tissue distribution, expressed by the venom gland.

Its subcellular location is the secreted. Functionally, beta toxins bind voltage-independently at site-4 of sodium channels and shift the voltage of activation toward more negative potentials thereby affecting sodium channel activation and promoting spontaneous and repetitive firing. A mixture of Cbo2 and Cbo3 is weakly active on the human voltage-gated sodium channels Nav1.4/SCN4A and Nav1.6/SCN8A when tested at 200 nM. In vivo, is toxic to mice when intraperitoneally injected. This Centruroides bonito (Scorpion) protein is Beta-toxin Cbo3.